An 85-amino-acid polypeptide reads, in one-letter code: Large ribosomal subunit protein bL27 (85 aa).

The interval 1 to 20 (MAHKKAGGSTRNGRDSEAKR) is disordered.

This sequence belongs to the bacterial ribosomal protein bL27 family.

The polypeptide is Large ribosomal subunit protein bL27 (Proteus mirabilis (strain HI4320)).